Here is a 432-residue protein sequence, read N- to C-terminus: Enolase (432 aa).

Residue glutamine 166 participates in (2R)-2-phosphoglycerate binding. Glutamate 208 functions as the Proton donor in the catalytic mechanism. The Mg(2+) site is built by aspartate 245, glutamate 291, and aspartate 318. Positions 343, 372, 373, and 394 each coordinate (2R)-2-phosphoglycerate. Lysine 343 (proton acceptor) is an active-site residue.

The protein belongs to the enolase family. Mg(2+) serves as cofactor.

The protein localises to the cytoplasm. It is found in the secreted. It localises to the cell surface. It carries out the reaction (2R)-2-phosphoglycerate = phosphoenolpyruvate + H2O. Its pathway is carbohydrate degradation; glycolysis; pyruvate from D-glyceraldehyde 3-phosphate: step 4/5. In terms of biological role, catalyzes the reversible conversion of 2-phosphoglycerate (2-PG) into phosphoenolpyruvate (PEP). It is essential for the degradation of carbohydrates via glycolysis. The polypeptide is Enolase (Leptospira borgpetersenii serovar Hardjo-bovis (strain L550)).